The primary structure comprises 130 residues: Small ribosomal subunit protein uS11 (130 aa).

It belongs to the universal ribosomal protein uS11 family. As to quaternary structure, part of the 30S ribosomal subunit.

Located on the platform of the 30S subunit. The chain is Small ribosomal subunit protein uS11 from Thermoplasma acidophilum (strain ATCC 25905 / DSM 1728 / JCM 9062 / NBRC 15155 / AMRC-C165).